A 362-amino-acid chain; its full sequence is GTP cyclohydrolase FolE2 (362 aa).

It belongs to the GTP cyclohydrolase IV family.

It catalyses the reaction GTP + H2O = 7,8-dihydroneopterin 3'-triphosphate + formate + H(+). It participates in cofactor biosynthesis; 7,8-dihydroneopterin triphosphate biosynthesis; 7,8-dihydroneopterin triphosphate from GTP: step 1/1. In terms of biological role, converts GTP to 7,8-dihydroneopterin triphosphate. In Jannaschia sp. (strain CCS1), this protein is GTP cyclohydrolase FolE2.